The primary structure comprises 199 residues: Small ribosomal subunit protein uS2 (199 aa).

This sequence belongs to the universal ribosomal protein uS2 family.

This chain is Small ribosomal subunit protein uS2 (rps2), found in Thermoplasma acidophilum (strain ATCC 25905 / DSM 1728 / JCM 9062 / NBRC 15155 / AMRC-C165).